A 264-amino-acid polypeptide reads, in one-letter code: Diphthine synthase (264 aa).

S-adenosyl-L-methionine is bound by residues Leu-9, Asp-84, Val-87, 112 to 113, Leu-164, Ala-207, and His-232; that span reads SI.

Belongs to the diphthine synthase family. Homodimer.

The catalysed reaction is 2-[(3S)-amino-3-carboxypropyl]-L-histidyl-[translation elongation factor 2] + 3 S-adenosyl-L-methionine = diphthine-[translation elongation factor 2] + 3 S-adenosyl-L-homocysteine + 3 H(+). It participates in protein modification; peptidyl-diphthamide biosynthesis. S-adenosyl-L-methionine-dependent methyltransferase that catalyzes the trimethylation of the amino group of the modified target histidine residue in translation elongation factor 2 (EF-2), to form an intermediate called diphthine. The three successive methylation reactions represent the second step of diphthamide biosynthesis. This is Diphthine synthase from Methanothermobacter thermautotrophicus (strain ATCC 29096 / DSM 1053 / JCM 10044 / NBRC 100330 / Delta H) (Methanobacterium thermoautotrophicum).